We begin with the raw amino-acid sequence, 361 residues long: Chorismate synthase (361 aa).

NADP(+) is bound by residues R48 and R54. FMN is bound by residues 131-133, 243-244, G287, 302-306, and R328; these read RSS, NA, and KPTSS.

The protein belongs to the chorismate synthase family. In terms of assembly, homotetramer. The cofactor is FMNH2.

It carries out the reaction 5-O-(1-carboxyvinyl)-3-phosphoshikimate = chorismate + phosphate. It participates in metabolic intermediate biosynthesis; chorismate biosynthesis; chorismate from D-erythrose 4-phosphate and phosphoenolpyruvate: step 7/7. Functionally, catalyzes the anti-1,4-elimination of the C-3 phosphate and the C-6 proR hydrogen from 5-enolpyruvylshikimate-3-phosphate (EPSP) to yield chorismate, which is the branch point compound that serves as the starting substrate for the three terminal pathways of aromatic amino acid biosynthesis. This reaction introduces a second double bond into the aromatic ring system. The sequence is that of Chorismate synthase from Rhodopseudomonas palustris (strain HaA2).